Reading from the N-terminus, the 411-residue chain is Probable indole-3-pyruvate monooxygenase YUCCA4 (411 aa).

21 to 26 (GAGPSG) serves as a coordination point for FAD. Position 183–188 (183–188 (GCGNSG)) interacts with NADP(+).

The protein belongs to the FMO family. The cofactor is FAD. As to expression, expressed in leaves, stems, flowers, buds and siliques. Detected in the apical gynoecium and in the developing ovules.

It is found in the cytoplasm. Its subcellular location is the endoplasmic reticulum membrane. It carries out the reaction indole-3-pyruvate + NADPH + O2 + H(+) = (indol-3-yl)acetate + CO2 + NADP(+) + H2O. It participates in plant hormone metabolism; auxin biosynthesis. Functionally, involved in auxin biosynthesis. Both isoforms are catalitically active. Involved during embryogenesis and seedling development. Required for the formation of floral organs and vascular tissues. Belongs to the set of redundant YUCCA genes probably responsible for auxin biosynthesis in shoots. This is Probable indole-3-pyruvate monooxygenase YUCCA4 (YUC4) from Arabidopsis thaliana (Mouse-ear cress).